A 779-amino-acid chain; its full sequence is MEKRKRESSERSFGESESVSSLSEKDSEIQPESTMESRDDEIQSPTVSLEVETEKEELKDSMKTLAEKLSAALANVSAKDDLVKQHVKVAEEAVAGWEKAENEVVELKEKLEAADDKNRVLEDRVSHLDGALKECVRQLRQARDEQEQRIQDAVIERTQELQSSRTSLENQIFETATKSEELSQMAESVAKENVMLRHELLARCEELEIRTIERDLSTQAAETASKQQLDSIKKVAKLEAECRKFRMLAKSSASFNDHRSTDSHSDGGERMDVSCSDSWASSTLIEKRSLQGTSSSIELDLMGDFLEMERLVALPETPDGNGKSGPESVTEEVVVPSENSLASEIEVLTSRIKELEEKLEKLEAEKHELENEVKCNREEAVVHIENSEVLTSRTKELEEKLEKLEAEKEELKSEVKCNREKAVVHVENSLAAEIEVLTSRTKELEEQLEKLEAEKVELESEVKCNREEAVAQVENSLATEIEVLTCRIKQLEEKLEKLEVEKDELKSEVKCNREVESTLRFELEAIACEKMELENKLEKLEVEKAELQISFDIIKDKYEESQVCLQEIETKLGEIQTEMKLVNELKAEVESQTIAMEADAKTKSAKIESLEEDMRKERFAFDELRRKCEALEEEISLHKENSIKSENKEPKIKQEDIETAAGKLANCQKTIASLGKQLQSLATLEDFLTDTPIIPMAANGVSSSSNSESWKVHKNETFMTRNHPESIKPTKETSPSSSSSTASAAVSMPVSTNRGSSEKNRNGFATVFTRSKDGIHLAI.

Over residues 1–14 the composition is skewed to basic and acidic residues; the sequence is MEKRKRESSERSFG. Disordered regions lie at residues 1 to 55, 253 to 274, and 315 to 336; these read MEKR…ETEK, ASFN…MDVS, and PETP…VVVP. Residues 47-200 are a coiled coil; that stretch reads VSLEVETEKE…KENVMLRHEL (154 aa). Positions 256–272 are enriched in basic and acidic residues; sequence NDHRSTDSHSDGGERMD. Low complexity predominate over residues 324 to 336; sequence SGPESVTEEVVVP. Positions 337–674 form a coiled coil; the sequence is SENSLASEIE…ANCQKTIASL (338 aa). Positions 718–731 are enriched in basic and acidic residues; the sequence is FMTRNHPESIKPTK. The tract at residues 718 to 764 is disordered; the sequence is FMTRNHPESIKPTKETSPSSSSSTASAAVSMPVSTNRGSSEKNRNGF. The span at 733-752 shows a compositional bias: low complexity; that stretch reads TSPSSSSSTASAAVSMPVST.

The protein belongs to the FPP family. As to quaternary structure, interacts with WPP/MAF proteins.

The polypeptide is Filament-like plant protein 1 (FPP1) (Arabidopsis thaliana (Mouse-ear cress)).